A 579-amino-acid polypeptide reads, in one-letter code: MVQEELWAAFSGPSGVALACCLVAAALALRWSSRRMARGAAARARQRQQAALETMDKAAQRFRLQNPDLDSEMLLALPLPQLVQKVRSGELSPEAVLFSYLQKAWEVNRGTNCVTTYLADCEAQLCQAPGQGLLYGVPVSLKECFSCKGHDSTLGLSRNQGTPAECDCVVVQVLKLQGAVPFVHTNVPQSMFSYDCSNPLFGQTTNPWMSSKSPGGSSGGEGALIAAGGSPLGLGTDIGGSIRFPSAFCGICGIKPTGNRISKSGLKGSVYGQVAVQLSVGPMARDVESLALCLRALLCEDMFRLDPTVPPLPFNEEVYASSRPLRVGYYETDNYTMPTPAMRRALLETKRSLEAAGHTLIPFLPANIPHALEALSTGGLFSDGGKRLLQNFEGDYVDSCLGDLISILRLPKWLKGLLAFMLRPLLPRLAGFLSSLRPRSAGKLWELQHEIEMYRHSVIAQWRALDLDVVLTPMLSPALDLNAPGKATGAVSYTLLYNCLDFPAGVVPVTTVTAEDEAQMEHYKGYFGDIWDKVVQKAMKRSVGLPVAVQCVALPWQEELCLRFMREVERLMAPGRQPS.

A helical transmembrane segment spans residues 9–29 (AFSGPSGVALACCLVAAALAL). Topologically, residues 30 to 403 (RWSSRRMARG…GDYVDSCLGD (374 aa)) are cytoplasmic. Lys-142 (charge relay system) is an active-site residue. Substrate contacts are provided by residues Met-191, Ser-217, and 238 to 241 (IGGS). The Charge relay system role is filled by Ser-217. Ser-241 functions as the Acyl-ester intermediate in the catalytic mechanism. Ser-241 carries the post-translational modification Phosphoserine. The stretch at 404 to 433 (LISILRLPKWLKGLLAFMLRPLLPRLAGFL) is an intramembrane region. Residues 434–579 (SSLRPRSAGK…RLMAPGRQPS (146 aa)) lie on the Cytoplasmic side of the membrane.

This sequence belongs to the amidase family. In terms of assembly, homodimer.

The protein localises to the endoplasmic reticulum membrane. Its subcellular location is the golgi apparatus membrane. The catalysed reaction is N-(5Z,8Z,11Z,14Z-eicosatetraenoyl)-ethanolamine + H2O = ethanolamine + (5Z,8Z,11Z,14Z)-eicosatetraenoate. It carries out the reaction (9Z)-octadecenamide + H2O = (9Z)-octadecenoate + NH4(+). The enzyme catalyses 2-(5Z,8Z,11Z,14Z-eicosatetraenoyl)-glycerol + H2O = glycerol + (5Z,8Z,11Z,14Z)-eicosatetraenoate + H(+). It catalyses the reaction 1-O-methyl-(5Z,8Z,11Z,14Z)-eicosatetraenoate + H2O = methanol + (5Z,8Z,11Z,14Z)-eicosatetraenoate + H(+). The catalysed reaction is (9Z,12Z,15Z)-octadecatrienamide + H2O = (9Z,12Z,15Z)-octadecatrienoate + NH4(+). It carries out the reaction (5Z,8Z,11Z,14Z)-eicosatetraenamide + H2O = (5Z,8Z,11Z,14Z)-eicosatetraenoate + NH4(+). The enzyme catalyses (6Z)-octadecenamide + H2O = (6Z)-octadecenoate + NH4(+). It catalyses the reaction (15Z)-tetracosenamide + H2O = (15Z)-tetracosenoate + NH4(+). The catalysed reaction is (8Z,11Z,14Z)-eicosatrienamide + H2O = (8Z,11Z,14Z)-eicosatrienoate + NH4(+). It carries out the reaction (11Z,14Z,17Z)-eicosatrienamide + H2O = (11Z,14Z,17Z)-eicosatrienoate + NH4(+). The enzyme catalyses (11Z,14Z)-eicosadienamide + H2O = (11Z,14Z)-eicosadienoate + NH4(+). It catalyses the reaction (9Z,12Z)-octadecadienamide + H2O = (9Z,12Z)-octadecadienoate + NH4(+). The catalysed reaction is tetradecamide + H2O = tetradecanoate + NH4(+). It carries out the reaction N-(9Z-octadecenoyl) ethanolamine + H2O = ethanolamine + (9Z)-octadecenoate. The enzyme catalyses N-(9Z-octadecenoyl)-taurine + H2O = taurine + (9Z)-octadecenoate. It catalyses the reaction (11Z)-eicosenamide + H2O = (11Z)-eicosenoate + NH4(+). The catalysed reaction is N-(9Z-hexadecenoyl) ethanolamine + H2O = (9Z)-hexadecenoate + ethanolamine. It carries out the reaction N-octadecanoyl ethanolamine + H2O = octadecanoate + ethanolamine. The enzyme catalyses N-docosanoyl-ethanolamine + H2O = docosanoate + ethanolamine. It catalyses the reaction N-tetracosanoyl-taurine + H2O = tetracosanoate + taurine. The catalysed reaction is N-(15Z-tetracosenoyl)-ethanolamine + H2O = (15Z)-tetracosenoate + ethanolamine. It carries out the reaction N-docosanoyl-taurine + H2O = docosanoate + taurine. The enzyme catalyses N-(15Z-tetracosenoyl)-taurine + H2O = (15Z)-tetracosenoate + taurine. It catalyses the reaction N-tricosanoyl-taurine + H2O = tricosanoate + taurine. The catalysed reaction is (9Z)-octadecenoate + glycine = N-(9Z-octadecenoyl)glycine + H2O. It carries out the reaction N-(5Z,8Z,11Z,14Z)-eicosatetraenoyl-glycine + H2O = (5Z,8Z,11Z,14Z)-eicosatetraenoate + glycine. The enzyme catalyses N-(5Z,8Z,11Z,14Z-eicosatetraenoyl)-L-serine + H2O = (5Z,8Z,11Z,14Z)-eicosatetraenoate + L-serine. Its activity is regulated as follows. inhibited by trifluoromethyl ketone. Catalyzes the hydrolysis of endogenous amidated lipids like the sleep-inducing lipid oleamide ((9Z)-octadecenamide), the endocannabinoid anandamide (N-(5Z,8Z,11Z,14Z-eicosatetraenoyl)-ethanolamine), as well as other fatty amides, to their corresponding fatty acids, thereby regulating the signaling functions of these molecules. Also catalyzes the hydrolysis of the endocannabinoid 2-arachidonoylglycerol (2-(5Z,8Z,11Z,14Z-eicosatetraenoyl)-glycerol). FAAH cooperates with PM20D1 in the hydrolysis of amino acid-conjugated fatty acids such as N-fatty acyl glycine and N-fatty acyl-L-serine, thereby acting as a physiological regulator of specific subsets of intracellular, but not of extracellular, N-fatty acyl amino acids. This chain is Fatty-acid amide hydrolase 1 (FAAH), found in Sus scrofa (Pig).